Consider the following 129-residue polypeptide: Small ribosomal subunit protein uS11 (129 aa).

Belongs to the universal ribosomal protein uS11 family. In terms of assembly, part of the 30S ribosomal subunit. Interacts with proteins S7 and S18. Binds to IF-3.

Its function is as follows. Located on the platform of the 30S subunit, it bridges several disparate RNA helices of the 16S rRNA. Forms part of the Shine-Dalgarno cleft in the 70S ribosome. This Limosilactobacillus reuteri (strain DSM 20016) (Lactobacillus reuteri) protein is Small ribosomal subunit protein uS11.